Here is a 324-residue protein sequence, read N- to C-terminus: Protein GET4 (324 aa).

It belongs to the GET4 family. As to quaternary structure, interacts with GET3A.

It is found in the cytoplasm. The protein resides in the cytosol. In terms of biological role, involved in the regulation of root hair growth. This is Protein GET4 from Arabidopsis thaliana (Mouse-ear cress).